The sequence spans 126 residues: Large ribosomal subunit protein bL17 (126 aa).

It belongs to the bacterial ribosomal protein bL17 family. Part of the 50S ribosomal subunit. Contacts protein L32.

The chain is Large ribosomal subunit protein bL17 from Lysinibacillus sphaericus (strain C3-41).